A 133-amino-acid polypeptide reads, in one-letter code: Small ribosomal subunit protein uS8 (133 aa).

This sequence belongs to the universal ribosomal protein uS8 family. In terms of assembly, part of the 30S ribosomal subunit.

Functionally, one of the primary rRNA binding proteins, it binds directly to 16S rRNA central domain where it helps coordinate assembly of the platform of the 30S subunit. The polypeptide is Small ribosomal subunit protein uS8 (Metallosphaera sedula (strain ATCC 51363 / DSM 5348 / JCM 9185 / NBRC 15509 / TH2)).